The chain runs to 452 residues: Trigger factor (452 aa).

Positions 170-256 (NSIVKVDFVE…IKSIKKRDLP (87 aa)) constitute a PPIase FKBP-type domain.

It belongs to the FKBP-type PPIase family. Tig subfamily.

It localises to the cytoplasm. The catalysed reaction is [protein]-peptidylproline (omega=180) = [protein]-peptidylproline (omega=0). Its function is as follows. Involved in protein export. Acts as a chaperone by maintaining the newly synthesized protein in an open conformation. Functions as a peptidyl-prolyl cis-trans isomerase. This chain is Trigger factor, found in Borrelia garinii subsp. bavariensis (strain ATCC BAA-2496 / DSM 23469 / PBi) (Borreliella bavariensis).